Here is a 307-residue protein sequence, read N- to C-terminus: Ribonuclease Z (307 aa).

Zn(2+) is bound by residues His63, His65, Asp67, His68, His141, Asp208, and His266. The active-site Proton acceptor is Asp67.

This sequence belongs to the RNase Z family. In terms of assembly, homodimer. Zn(2+) serves as cofactor.

The catalysed reaction is Endonucleolytic cleavage of RNA, removing extra 3' nucleotides from tRNA precursor, generating 3' termini of tRNAs. A 3'-hydroxy group is left at the tRNA terminus and a 5'-phosphoryl group is left at the trailer molecule.. Zinc phosphodiesterase, which displays some tRNA 3'-processing endonuclease activity. Probably involved in tRNA maturation, by removing a 3'-trailer from precursor tRNA. This chain is Ribonuclease Z, found in Chlamydia pneumoniae (Chlamydophila pneumoniae).